We begin with the raw amino-acid sequence, 227 residues long: MAYPFQLGLQDATSPIMEELMNFHDHTLMIVFLISSLVLYIISLMLTTKLTHTSTMDAQEVETIWTILPAAILILIALPSLRILYMMDEINNPVLTVKTMGHQWYWSYEYTDYEDLCFDSYMIPTNDLKPGELRLLEVDNRVVLPMELPIRMLISSEDVLHSWAVPSLGLKTDAIPGRLNQATVTSNRPGLFYGQCSEICGSNHSFMPIVLEMVPLKYFENWSASMI.

Over 1-14 the chain is Mitochondrial intermembrane; the sequence is MAYPFQLGLQDATS. The chain crosses the membrane as a helical span at residues 15 to 45; that stretch reads PIMEELMNFHDHTLMIVFLISSLVLYIISLM. Over 46–59 the chain is Mitochondrial matrix; the sequence is LTTKLTHTSTMDAQ. The chain crosses the membrane as a helical span at residues 60-87; the sequence is EVETIWTILPAAILILIALPSLRILYMM. Residues 88–227 are Mitochondrial intermembrane-facing; it reads DEINNPVLTV…YFENWSASMI (140 aa). Residues His-161, Cys-196, Glu-198, Cys-200, His-204, and Met-207 each contribute to the Cu cation site. Residue Glu-198 coordinates Mg(2+). At Tyr-218 the chain carries Phosphotyrosine.

It belongs to the cytochrome c oxidase subunit 2 family. As to quaternary structure, component of the cytochrome c oxidase (complex IV, CIV), a multisubunit enzyme composed of 14 subunits. The complex is composed of a catalytic core of 3 subunits MT-CO1, MT-CO2 and MT-CO3, encoded in the mitochondrial DNA, and 11 supernumerary subunits COX4I, COX5A, COX5B, COX6A, COX6B, COX6C, COX7A, COX7B, COX7C, COX8 and NDUFA4, which are encoded in the nuclear genome. The complex exists as a monomer or a dimer and forms supercomplexes (SCs) in the inner mitochondrial membrane with NADH-ubiquinone oxidoreductase (complex I, CI) and ubiquinol-cytochrome c oxidoreductase (cytochrome b-c1 complex, complex III, CIII), resulting in different assemblies (supercomplex SCI(1)III(2)IV(1) and megacomplex MCI(2)III(2)IV(2)). Found in a complex with TMEM177, COA6, COX18, COX20, SCO1 and SCO2. Interacts with TMEM177 in a COX20-dependent manner. Interacts with COX20. Interacts with COX16. Requires Cu cation as cofactor.

The protein localises to the mitochondrion inner membrane. It catalyses the reaction 4 Fe(II)-[cytochrome c] + O2 + 8 H(+)(in) = 4 Fe(III)-[cytochrome c] + 2 H2O + 4 H(+)(out). In terms of biological role, component of the cytochrome c oxidase, the last enzyme in the mitochondrial electron transport chain which drives oxidative phosphorylation. The respiratory chain contains 3 multisubunit complexes succinate dehydrogenase (complex II, CII), ubiquinol-cytochrome c oxidoreductase (cytochrome b-c1 complex, complex III, CIII) and cytochrome c oxidase (complex IV, CIV), that cooperate to transfer electrons derived from NADH and succinate to molecular oxygen, creating an electrochemical gradient over the inner membrane that drives transmembrane transport and the ATP synthase. Cytochrome c oxidase is the component of the respiratory chain that catalyzes the reduction of oxygen to water. Electrons originating from reduced cytochrome c in the intermembrane space (IMS) are transferred via the dinuclear copper A center (CU(A)) of subunit 2 and heme A of subunit 1 to the active site in subunit 1, a binuclear center (BNC) formed by heme A3 and copper B (CU(B)). The BNC reduces molecular oxygen to 2 water molecules using 4 electrons from cytochrome c in the IMS and 4 protons from the mitochondrial matrix. This Praomys tullbergi (Tullberg's soft-furred rat) protein is Cytochrome c oxidase subunit 2 (MT-CO2).